The sequence spans 703 residues: Lethal(3)malignant brain tumor-like protein 2 (703 aa).

The tract at residues 1–85 is disordered; sequence MEKPRGTEEA…NNRSLDGSGS (85 aa). Position 13 is a phosphoserine (Ser13). Positions 15–25 are enriched in acidic residues; sequence PMEEEEEDDLD. Residues 35-49 are compositionally biased toward low complexity; sequence SYNSSAGSESSSYLE. The segment covering 50 to 60 has biased composition (acidic residues); that stretch reads ESSEAENEDRE. Ser67 carries the post-translational modification Phosphoserine. The segment covering 73 to 82 has biased composition (polar residues); sequence SSANNRSLDG. Residues 81-116 form an FCS-type zinc finger; the sequence is DGSGSEPAVCEMCGIVGTREAFFSKTKRFCSVSCSR. Cys90, Cys93, Cys110, and Cys114 together coordinate Zn(2+). 4 MBT repeats span residues 179–283, 291–391, 397–500, and 508–604; these read FDWG…LVPP, TDWK…IKMS, MSHH…LTPP, and FAWE…LQPP. Ser338 bears the Phosphoserine mark. A Glycyl lysine isopeptide (Lys-Gly) (interchain with G-Cter in SUMO2) cross-link involves residue Lys405. The segment at 604-649 is disordered; that stretch reads PVSAEPNTPQKGKDTTKKKKKQFGKKRKRIPSAKTRPLRQGSKKPL. Residues 619–634 show a composition bias toward basic residues; the sequence is TKKKKKQFGKKRKRIP. Residues Lys647 and Lys673 each participate in a glycyl lysine isopeptide (Lys-Gly) (interchain with G-Cter in SUMO2) cross-link. A disordered region spans residues 675-703; it reads EHQDISSLDRSPSPQLPLPIESIKQERNN. A phosphoserine mark is found at Ser681, Ser685, and Ser687. Residue Lys698 forms a Glycyl lysine isopeptide (Lys-Gly) (interchain with G-Cter in SUMO1); alternate linkage. Lys698 participates in a covalent cross-link: Glycyl lysine isopeptide (Lys-Gly) (interchain with G-Cter in SUMO2); alternate.

Part of the E2F6.com-1 complex in G0 phase composed of E2F6, MGA, MAX, TFDP1, CBX3, BAT8, EUHMTASE1, RING1, RNF2, MBLR, BAT8 and YAF2. Phosphorylated. As to expression, ubiquitous.

Its subcellular location is the nucleus. Putative Polycomb group (PcG) protein. PcG proteins maintain the transcriptionally repressive state of genes, probably via a modification of chromatin, rendering it heritably changed in its expressibility. Its association with a chromatin-remodeling complex suggests that it may contribute to prevent expression of genes that trigger the cell into mitosis. Binds to monomethylated and dimethylated 'Lys-20' on histone H4. Binds histone H3 peptides that are monomethylated or dimethylated on 'Lys-4', 'Lys-9' or 'Lys-27'. The sequence is that of Lethal(3)malignant brain tumor-like protein 2 (L3mbtl2) from Mus musculus (Mouse).